The sequence spans 73 residues: uncharacterized protein (73 aa).

This is an uncharacterized protein from Thermoproteus tenax virus 1 (strain KRA1) (TTV1).